The sequence spans 116 residues: MTRVKRGNVARKRRKKILKLAKGYRGSHSRLFRIANQQVMKALRNAYRDRRKRKRDFRRLWIARINAATRQHGVSYSKFMGQLKRADIQLNRKMLAQLAATDPDSFSKIVELAGKA.

It belongs to the bacterial ribosomal protein bL20 family.

In terms of biological role, binds directly to 23S ribosomal RNA and is necessary for the in vitro assembly process of the 50S ribosomal subunit. It is not involved in the protein synthesizing functions of that subunit. This is Large ribosomal subunit protein bL20 from Acaryochloris marina (strain MBIC 11017).